The sequence spans 911 residues: MSQVTLLDEVSQWNQETCQQELKTVLPKLVAMHHDTDSWEEHTNILQIITSRFLPHLSLSDLETGCFSTALPKVVKVFASLLEEISKQIGGLSSQNTELQLFLRKILKTMVQTLECLSGCVRHVCSIEESVSFSNIRSLPSCILGVLKDTFQHCKDSEVMYSGRLSLVGDLLQGLFKEAYSLQKGLMELLDKINFEDTASEEEISDIVTVIHSLLDICLIISRLDIALHANTWKFIIKQSIKYQSLVEDRLHHTDISFALCEDLCRSVENCLELAQQIQQAGLQEAVHSPEYKLFQKATKMCRFFANTLVHYTKEFKVFLSKSCSRFHQLYLQINSKFLPSLCAPSVPPTLSEELRVAVLVPMDAMLTQMMSFQPFAESVLNPDHQSSAKLFLPQCLLLVNVMGKLSSQPEEALRLWSDGSQFPEETPRWSVFEAVFQSFRLCVLERLVPVCLPGVMLRGQAQGTVSLHQHVCVHMCACVAVLPAQHFPPLERSLLAAVLQADTQTALLATDVWCFLARYGTAELCYHHVVLIAHLLRACPAGGYQLFHLALVLRRLLFLMTPKHQVEFVERFPLSQEENLCVWRHTLLKCLCVEARVRVEEQVLDRATVVLEEWQNSGCRLGEIPRLNRILDCVLLVVGGSGTQNECVESLVKIISQLWSHMRSSQVQVHVTLQCTVKLLLSLSAVLIKSLEPHIILQAVSCLSGLSIHQCPDDLLLAALEFLASLGQIFIPPNIQGQVLPQISSLFNGFLTRPSWLILHHVLEAFGCFAEITNHEEVISQTLKTEEVKSKVLNFLSKTVSRQESEETRLERLKEWKCVIEKHCQQMESEKSQPAQTPLTEEPCAKRARQETKAEEEYERYLQTAEGALKALQAIERSEHSPSPPQWVRARLQLLQTLITQINTTTEEQS.

Residues 830 to 853 (SEKSQPAQTPLTEEPCAKRARQET) form a disordered region. Over residues 844–853 (PCAKRARQET) the composition is skewed to basic and acidic residues.

It is found in the chromosome. The protein localises to the centromere. The protein resides in the kinetochore. Its subcellular location is the nucleus. It localises to the midbody. It is found in the cytoplasm. The protein localises to the cytoskeleton. The protein resides in the spindle. Functionally, may play a role in chromosome segregation. The chain is FIGNL1-interacting regulator of recombination and mitosis from Danio rerio (Zebrafish).